A 247-amino-acid chain; its full sequence is MTDQPDLFGLAPDAPRPIIPANLPEDWQEALLPEFSAPYFHELTDFLRQERKEYTIYPPAPDVFNALRYTPLGEVKVLILGQDPYHGPNQAHGLSFSVRPGVRVPPSLRNIYKELTEDIPGFVAPKHGYLRSWAEQGVLLLNAVLTVRAGQANSHQGKGWEHFTDAVIKAVNAKEERVVFILWGSYARKKKKLITGKNHVVIESGHPSPLSEQYFFGTRPFSKTNEALEKAGRGPVEWQLPATVTEE.

Asp83 serves as the catalytic Proton acceptor.

This sequence belongs to the uracil-DNA glycosylase (UDG) superfamily. UNG family.

The protein localises to the cytoplasm. It catalyses the reaction Hydrolyzes single-stranded DNA or mismatched double-stranded DNA and polynucleotides, releasing free uracil.. Excises uracil residues from the DNA which can arise as a result of misincorporation of dUMP residues by DNA polymerase or due to deamination of cytosine. The chain is Uracil-DNA glycosylase from Deinococcus radiodurans (strain ATCC 13939 / DSM 20539 / JCM 16871 / CCUG 27074 / LMG 4051 / NBRC 15346 / NCIMB 9279 / VKM B-1422 / R1).